The sequence spans 143 residues: NADH-quinone oxidoreductase subunit A (143 aa).

The next 3 membrane-spanning stretches (helical) occupy residues 8–28 (FGNV…GYLT), 63–83 (FYVV…LYPW), and 93–113 (FALI…AYAW).

This sequence belongs to the complex I subunit 3 family. As to quaternary structure, NDH-1 is composed of 14 different subunits. Subunits NuoA, H, J, K, L, M, N constitute the membrane sector of the complex.

Its subcellular location is the cell inner membrane. The catalysed reaction is a quinone + NADH + 5 H(+)(in) = a quinol + NAD(+) + 4 H(+)(out). In terms of biological role, NDH-1 shuttles electrons from NADH, via FMN and iron-sulfur (Fe-S) centers, to quinones in the respiratory chain. The immediate electron acceptor for the enzyme in this species is believed to be a menaquinone. Couples the redox reaction to proton translocation (for every two electrons transferred, four hydrogen ions are translocated across the cytoplasmic membrane), and thus conserves the redox energy in a proton gradient. The polypeptide is NADH-quinone oxidoreductase subunit A (Pelodictyon phaeoclathratiforme (strain DSM 5477 / BU-1)).